We begin with the raw amino-acid sequence, 357 residues long: Queuosine-tRNA galactosyltransferase (357 aa).

The protein belongs to the glycosyltransferase 2 family.

Its subcellular location is the cytoplasm. The enzyme catalyses queuosine(34) in tRNA(Tyr) + UDP-alpha-D-galactose = O-5''-beta-D-galactosylqueuosine(34) in tRNA(Tyr) + UDP + H(+). Glycosyltransferase that specifically catalyzes galactosylation of cytoplasmic tRNA(Tyr) modified with queuosine at position 34 (queuosine(34)). Galactosylates the cyclopentene hydroxyl group of queuosine(34) in tRNA(Tyr) to form galactosyl-queuosine(34). Mannosylation of queuosine(34) in tRNA(Tyr) is required to slow-down elongation at cognate codons UAC and suppress stop codon readthrough, thereby regulating protein translation. This Mus musculus (Mouse) protein is Queuosine-tRNA galactosyltransferase.